Here is a 492-residue protein sequence, read N- to C-terminus: Bifunctional purine biosynthesis protein PurH (492 aa).

The MGS-like domain maps to 1-144; it reads MKKAILSVSN…KNFKHVTTIV (144 aa).

This sequence belongs to the PurH family.

It carries out the reaction (6R)-10-formyltetrahydrofolate + 5-amino-1-(5-phospho-beta-D-ribosyl)imidazole-4-carboxamide = 5-formamido-1-(5-phospho-D-ribosyl)imidazole-4-carboxamide + (6S)-5,6,7,8-tetrahydrofolate. The enzyme catalyses IMP + H2O = 5-formamido-1-(5-phospho-D-ribosyl)imidazole-4-carboxamide. It functions in the pathway purine metabolism; IMP biosynthesis via de novo pathway; 5-formamido-1-(5-phospho-D-ribosyl)imidazole-4-carboxamide from 5-amino-1-(5-phospho-D-ribosyl)imidazole-4-carboxamide (10-formyl THF route): step 1/1. The protein operates within purine metabolism; IMP biosynthesis via de novo pathway; IMP from 5-formamido-1-(5-phospho-D-ribosyl)imidazole-4-carboxamide: step 1/1. This is Bifunctional purine biosynthesis protein PurH from Staphylococcus epidermidis (strain ATCC 35984 / DSM 28319 / BCRC 17069 / CCUG 31568 / BM 3577 / RP62A).